We begin with the raw amino-acid sequence, 274 residues long: Large ribosomal subunit protein uL2 (274 aa).

The disordered stretch occupies residues 224-274 (VAMNPVDHPHGGGEGRTSGGRHPVTPWGIPTKGYKTRRNKRSNKLIVQKRK). Residues 257–274 (YKTRRNKRSNKLIVQKRK) are compositionally biased toward basic residues.

Belongs to the universal ribosomal protein uL2 family. Part of the 50S ribosomal subunit. Forms a bridge to the 30S subunit in the 70S ribosome.

Its function is as follows. One of the primary rRNA binding proteins. Required for association of the 30S and 50S subunits to form the 70S ribosome, for tRNA binding and peptide bond formation. It has been suggested to have peptidyltransferase activity; this is somewhat controversial. Makes several contacts with the 16S rRNA in the 70S ribosome. The chain is Large ribosomal subunit protein uL2 from Francisella tularensis subsp. mediasiatica (strain FSC147).